The chain runs to 451 residues: Tubulin gamma-2 chain (451 aa).

S131 is subject to Phosphoserine; by BRSK1. 142-148 (AGGTGSG) contributes to the GTP binding site.

Belongs to the tubulin family. Component of the gamma-tubulin ring complex (gTuRC) consisting of TUBGCP2, TUBGCP3, TUBGCP4, TUBGCP5 and TUBGCP6 and gamma-tubulin TUBG1 or TUBG2. TUBGCP2, TUBGCP3, TUBGCP4, TUBGCP5 and TUBGCP6 assemble in a 5:5:2:1:1 stoichiometry; each is associated with a gamma-tubulin, thereby arranging 14 gamma-tubulins in a helical manner. Gamma-tubulin at the first position is blocked by TUBGCP3 at the last position, allowing 13 protafilaments to grow into a microtubule. Interacts with alpha-beta tubulin heterodimers; the interaction allows microtubules to nucleate from the gTuRC. Post-translationally, phosphorylation at Ser-131 by BRSK1 regulates centrosome duplication, possibly by mediating relocation of gamma-tubulin and its associated proteins from the cytoplasm to the centrosome.

It localises to the cytoplasm. Its subcellular location is the cytoskeleton. It is found in the microtubule organizing center. The protein resides in the centrosome. In terms of biological role, tubulin is the major constituent of microtubules, protein filaments consisting of alpha- and beta-tubulin heterodimers. Gamma-tubulin is a key component of the gamma-tubulin ring complex (gTuRC) which mediates microtubule nucleation. The gTuRC regulates the minus-end nucleation of alpha-beta tubulin heterodimers that grow into microtubule protafilaments, a critical step in centrosome duplication and spindle formation. In Homo sapiens (Human), this protein is Tubulin gamma-2 chain (TUBG2).